We begin with the raw amino-acid sequence, 352 residues long: MFDLNQSLFLRALRRQPVERTPIWIMRQAGRYLPEYRKVREHAGDFLNLCKNPELACEVTLQPLRRYALDAAILFSDILTIPDAMGLGLYFAEGEGPRFTNPLQDTKAIHTLKIPSIPESLSYVFDAARLIRQEMPKELPLIGFSGSPWTLACYMVEGGSSRDFKRILNLIYTEKEAAHLLLNKLAVSVTAYLIEQIKAGVNAVMIFDTWGGVLTPQNYKDFSLAYMHQIVQQLKKEYPDIPVILFTKNGGQWLEWMAETGCDALGVDWTCDLASARKRVGGKVALQGNLDPAVLLTTKNCIRSEVGSVLASYGYGTGHIFNLGHGITPDVPPENVAIMIEAVHEISPQYHL.

Residues 27–31 (RQAGR), aspartate 77, tyrosine 154, threonine 209, and histidine 325 contribute to the substrate site.

The protein belongs to the uroporphyrinogen decarboxylase family. Homodimer.

It is found in the cytoplasm. The catalysed reaction is uroporphyrinogen III + 4 H(+) = coproporphyrinogen III + 4 CO2. It participates in porphyrin-containing compound metabolism; protoporphyrin-IX biosynthesis; coproporphyrinogen-III from 5-aminolevulinate: step 4/4. In terms of biological role, catalyzes the decarboxylation of four acetate groups of uroporphyrinogen-III to yield coproporphyrinogen-III. The protein is Uroporphyrinogen decarboxylase of Legionella pneumophila subsp. pneumophila (strain Philadelphia 1 / ATCC 33152 / DSM 7513).